The chain runs to 526 residues: Putative bifunctional polymyxin resistance protein ArnA (526 aa).

Positions 1 to 170 are formyltransferase ArnAFT; it reads MVKRADAGAI…TLGLVQGSRL (170 aa). Position 2-6 (2-6) interacts with (6R)-10-formyltetrahydrofolate; that stretch reads VKRAD. The segment at 180-526 is dehydrogenase ArnADH; that stretch reads RRTRVLILGV…RTVDLTDKPS (347 aa). NAD(+) contacts are provided by residues Asp213 and 234–235; that span reads DI. Residues Ala259, Tyr264, and 298 to 299 contribute to the UDP-alpha-D-glucuronate site; that span reads TS. Glu300 functions as the Proton acceptor; for decarboxylase activity in the catalytic mechanism. Residues Arg326, Asn358, 392-401, and Tyr479 contribute to the UDP-alpha-D-glucuronate site; that span reads KLIDGGKQKR. The active-site Proton donor; for decarboxylase activity is Arg485.

It in the N-terminal section; belongs to the Fmt family. UDP-L-Ara4N formyltransferase subfamily. The protein in the C-terminal section; belongs to the NAD(P)-dependent epimerase/dehydratase family. UDP-glucuronic acid decarboxylase subfamily. As to quaternary structure, homohexamer, formed by a dimer of trimers.

It carries out the reaction UDP-alpha-D-glucuronate + NAD(+) = UDP-beta-L-threo-pentopyranos-4-ulose + CO2 + NADH. The enzyme catalyses UDP-4-amino-4-deoxy-beta-L-arabinose + (6R)-10-formyltetrahydrofolate = UDP-4-deoxy-4-formamido-beta-L-arabinose + (6S)-5,6,7,8-tetrahydrofolate + H(+). Its pathway is nucleotide-sugar biosynthesis; UDP-4-deoxy-4-formamido-beta-L-arabinose biosynthesis; UDP-4-deoxy-4-formamido-beta-L-arabinose from UDP-alpha-D-glucuronate: step 1/3. It participates in nucleotide-sugar biosynthesis; UDP-4-deoxy-4-formamido-beta-L-arabinose biosynthesis; UDP-4-deoxy-4-formamido-beta-L-arabinose from UDP-alpha-D-glucuronate: step 3/3. The protein operates within bacterial outer membrane biogenesis; lipopolysaccharide biosynthesis. Its function is as follows. Bifunctional enzyme that catalyzes the oxidative decarboxylation of UDP-glucuronic acid (UDP-GlcUA) to UDP-4-keto-arabinose (UDP-Ara4O) and the addition of a formyl group to UDP-4-amino-4-deoxy-L-arabinose (UDP-L-Ara4N) to form UDP-L-4-formamido-arabinose (UDP-L-Ara4FN). The modified arabinose is attached to lipid A and is required for resistance to polymyxin and cationic antimicrobial peptides. This chain is Putative bifunctional polymyxin resistance protein ArnA (arnA), found in Shigella boydii serotype 18 (strain CDC 3083-94 / BS512).